A 184-amino-acid chain; its full sequence is Probable RNA 2'-phosphotransferase (184 aa).

The protein belongs to the KptA/TPT1 family.

Functionally, removes the 2'-phosphate from RNA via an intermediate in which the phosphate is ADP-ribosylated by NAD followed by a presumed transesterification to release the RNA and generate ADP-ribose 1''-2''-cyclic phosphate (APPR&gt;P). May function as an ADP-ribosylase. The chain is Probable RNA 2'-phosphotransferase from Rhodopirellula baltica (strain DSM 10527 / NCIMB 13988 / SH1).